The sequence spans 521 residues: Protein TESPA1 (521 aa).

Phosphoserine is present on serine 311. Positions 331–341 (QQDSDLGQFSQ) are enriched in polar residues. Disordered regions lie at residues 331–351 (QQDS…AEGK) and 461–521 (QQKW…GKDS). Over residues 466-475 (QSVDRPELRR) the composition is skewed to basic and acidic residues. Positions 485–498 (FDLEEVQSNSEEEQ) are enriched in acidic residues. The segment covering 505–514 (SRPRHPHHHQ) has biased composition (basic residues).

Interacts with PLCG1 and GRB2; the association is increased with prolonged stimulation of the TCR and may facilitate the assembly of the LAT signalosome. Interacts with ITPR1. Also interacts with ITPR3. Interacts with HSPA9. In terms of processing, may be phosphorylated in response to store-operated Ca(+2) entry.

Its subcellular location is the cytoplasm. It localises to the endoplasmic reticulum membrane. Functionally, required for the development and maturation of T-cells, its function being essential for the late stages of thymocyte development. Plays a role in T-cell antigen receptor (TCR)-mediated activation of the ERK and NFAT signaling pathways, possibly by serving as a scaffolding protein that promotes the assembly of the LAT signalosome in thymocytes. May play a role in the regulation of inositol 1,4,5-trisphosphate receptor-mediated Ca(2+) release and mitochondrial Ca(2+) uptake via the mitochondria-associated endoplasmic reticulum membrane (MAM) compartment. The chain is Protein TESPA1 (TESPA1) from Homo sapiens (Human).